The following is a 492-amino-acid chain: E3 ubiquitin-protein ligase XIAP (492 aa).

3 BIR repeats span residues 40–105 (RLAS…KFIN), 172–237 (RLQT…YFVL), and 271–334 (RLET…KFLI). Residues Cys-303, Cys-306, His-323, and Cys-330 each contribute to the Zn(2+) site. The segment at 445–480 (CKVCMDRRISIVFIPCGHLVACAVCADVLDKCPICC) adopts an RING-type zinc-finger fold.

It belongs to the IAP family. In terms of assembly, monomer, and homodimer. Degraded in a 2-step mechanism; a caspase-independent first step and a caspase-dependent second step. Stabilized indirectly by MAPK, which acts to delay caspase activation, rather than directly phosphorylating xiap.

The protein localises to the cytoplasm. The catalysed reaction is S-ubiquitinyl-[E2 ubiquitin-conjugating enzyme]-L-cysteine + [acceptor protein]-L-lysine = [E2 ubiquitin-conjugating enzyme]-L-cysteine + N(6)-ubiquitinyl-[acceptor protein]-L-lysine.. Its function is as follows. Multi-functional protein which regulates not only caspases and apoptosis, but also acts as an E3 ubiquitin-protein ligase mediating ubiquitination and subsequent proteasomal degradation of its target proteins. Acts as a direct caspase inhibitor. E3 ubiquitin-protein ligase that acts as an important regulator of innate immunity by mediating 'Lys-63'-linked polyubiquitination of ripk2 downstream of NOD1 and NOD2, thereby transforming ripk2 into a scaffolding protein for downstream effectors, ultimately leading to activation of the NF-kappa-B and MAP kinases signaling. A key apoptotic suppressor in eggs. Acts as a positive regulator of Wnt signaling. In Xenopus tropicalis (Western clawed frog), this protein is E3 ubiquitin-protein ligase XIAP (xiap).